The following is a 213-amino-acid chain: uncharacterized protein (213 aa).

3 residues coordinate S-adenosyl-L-methionine: Gly-53, Glu-74, and Asp-96.

This sequence belongs to the methyltransferase superfamily. YrrT family.

Its function is as follows. Could be a S-adenosyl-L-methionine-dependent methyltransferase. This is an uncharacterized protein from Bacillus pumilus (strain SAFR-032).